A 555-amino-acid chain; its full sequence is Branched-chain-amino-acid aminotransferase-like protein 1 (555 aa).

It belongs to the class-IV pyridoxal-phosphate-dependent aminotransferase family.

This chain is Branched-chain-amino-acid aminotransferase-like protein 1, found in Arabidopsis thaliana (Mouse-ear cress).